A 369-amino-acid polypeptide reads, in one-letter code: Anhydro-N-acetylmuramic acid kinase (369 aa).

12–19 (GTSLDGVD) is a binding site for ATP.

Belongs to the anhydro-N-acetylmuramic acid kinase family.

It catalyses the reaction 1,6-anhydro-N-acetyl-beta-muramate + ATP + H2O = N-acetyl-D-muramate 6-phosphate + ADP + H(+). Its pathway is amino-sugar metabolism; 1,6-anhydro-N-acetylmuramate degradation. It functions in the pathway cell wall biogenesis; peptidoglycan recycling. Its function is as follows. Catalyzes the specific phosphorylation of 1,6-anhydro-N-acetylmuramic acid (anhMurNAc) with the simultaneous cleavage of the 1,6-anhydro ring, generating MurNAc-6-P. Is required for the utilization of anhMurNAc either imported from the medium or derived from its own cell wall murein, and thus plays a role in cell wall recycling. In Shigella flexneri serotype 5b (strain 8401), this protein is Anhydro-N-acetylmuramic acid kinase.